We begin with the raw amino-acid sequence, 400 residues long: Leukosialin (400 aa).

The first 19 residues, 1 to 19 (MATLLLLLGVLVVSPDALG), serve as a signal peptide directing secretion. Over 20–253 (STTAVQTPTS…PFRNPDENSR (234 aa)) the chain is Extracellular. 4 O-linked (GalNAc...) threonine glycosylation sites follow: Thr21, Thr22, Thr26, and Thr28. Composition is skewed to polar residues over residues 21–51 (TTAVQTPTSGEPLVSTSEPLSSKMYTTSITS) and 58–112 (TGDQ…TPHA). The segment at 21 to 224 (TTAVQTPTSG…SSGASGPQVS (204 aa)) is disordered. 2 O-linked (GalNAc...) serine glycosylation sites follow: Ser29 and Ser35. Residue Thr36 is glycosylated (O-linked (GalNAc...) threonine). 3 O-linked (GalNAc...) serine glycosylation sites follow: Ser37, Ser41, and Ser42. O-linked (GalNAc...) threonine glycans are attached at residues Thr46 and Thr47. The O-linked (GalNAc...) serine glycan is linked to Ser48. Residues Thr50, Thr58, and Thr69 are each glycosylated (O-linked (GalNAc...) threonine). O-linked (GalNAc...) serine glycosylation is found at Ser99 and Ser103. 2 O-linked (GalNAc...) threonine glycosylation sites follow: Thr109 and Thr113. An O-linked (GalNAc...) serine glycan is attached at Ser114. Composition is skewed to polar residues over residues 121-164 (TANS…SRGT) and 172-182 (ATVSLETSKGT). Residues Thr136, Thr137, Thr173, and Thr178 are each glycosylated (O-linked (GalNAc...) threonine). A compositionally biased stretch (low complexity) spans 196-211 (TSTGTTGPPVTMTTGS). The span at 212–224 (LEPSSGASGPQVS) shows a compositional bias: polar residues. The N-linked (GlcNAc...) asparagine glycan is linked to Asn239. A helical transmembrane segment spans residues 254 to 276 (GMLPVAVLVALLAVIVLVALLLL). Residues 277–400 (WRRRQKRRTG…EPEGGDGAAP (124 aa)) lie on the Cytoplasmic side of the membrane. The segment at 278-308 (RRRQKRRTGALVLSRGGKRNGVVDAWAGPAQ) is required for interaction with EZR, MSN and RDX and for co-localization to microvilli. The short motif at 282–296 (KRRTGALVLSRGGKR) is the Nuclear localization signal element. Ser291 is subject to Phosphoserine. A compositionally biased stretch (gly residues) spans 320-332 (GGSGGDKGSGFPD). The tract at residues 320-400 (GGSGGDKGSG…EPEGGDGAAP (81 aa)) is disordered. A Phosphoserine modification is found at Ser336. The residue at position 341 (Thr341) is a Phosphothreonine. Residue Ser351 is modified to Phosphoserine. Ser355 bears the Phosphoserine; by PKC/PRKCQ mark. A phosphoserine mark is found at Ser368 and Ser379.

In terms of assembly, interacts with SIGLEC1. Monomer. Interacts with CTNNB1. Interacts with RDX (via FERM domain), EZR and MSN. In terms of processing, glycosylated; has a high content of sialic acid and O-linked carbohydrate structures. Phosphorylation at Ser-355 is regulated by chemokines, requires its association with ERM proteins (EZR, RDX and MSN) and is essential for its function in the regulation of T-cell trafficking to lymph nodes. Post-translationally, has a high content of sialic acid and O-linked carbohydrate structures. In terms of processing, cleavage by CTSG releases its extracellular domain and triggers its intramembrane proteolysis by gamma-secretase releasing the CD43 cytoplasmic tail chain (CD43-ct) which translocates to the nucleus. Sumoylated. Cell surface of thymocytes, T-lymphocytes, neutrophils, plasma cells and myelomas.

It localises to the membrane. The protein resides in the cell projection. The protein localises to the microvillus. Its subcellular location is the uropodium. It is found in the nucleus. It localises to the PML body. Predominant cell surface sialoprotein of leukocytes which regulates multiple T-cell functions, including T-cell activation, proliferation, differentiation, trafficking and migration. Positively regulates T-cell trafficking to lymph-nodes via its association with ERM proteins (EZR, RDX and MSN). Negatively regulates Th2 cell differentiation and predisposes the differentiation of T-cells towards a Th1 lineage commitment. Promotes the expression of IFN-gamma by T-cells during T-cell receptor (TCR) activation of naive cells and induces the expression of IFN-gamma by CD4(+) T-cells and to a lesser extent by CD8(+) T-cells. Plays a role in preparing T-cells for cytokine sensing and differentiation into effector cells by inducing the expression of cytokine receptors IFNGR and IL4R, promoting IFNGR and IL4R signaling and by mediating the clustering of IFNGR with TCR. Acts as a major E-selectin ligand responsible for Th17 cell rolling on activated vasculature and recruitment during inflammation. Mediates Th17 cells, but not Th1 cells, adhesion to E-selectin. Acts as a T-cell counter-receptor for SIGLEC1. Its function is as follows. Protects cells from apoptotic signals, promoting cell survival. This is Leukosialin (SPN) from Homo sapiens (Human).